Here is a 323-residue protein sequence, read N- to C-terminus: Macrolide efflux protein A (323 aa).

A run of 9 helical transmembrane segments spans residues Val-6 to Val-26, Leu-51 to Ile-71, Ser-105 to Trp-125, Asn-128 to Val-148, Phe-182 to Phe-202, Ile-219 to Gly-239, Ile-245 to Leu-265, Phe-270 to Val-290, and Tyr-303 to Leu-323.

Belongs to the major facilitator superfamily. Drug:H(+) antiporter-3 (DHA3) (TC 2.A.1.21) family.

It localises to the cell membrane. Confers resistance to 14-membered macrolides including erythromycin and to 15-membered macrolides but not to 16-membered macrolides, lincosamides or analogs of streptogramin B. May function as an efflux pump to regulate intracellular macrolide levels. This chain is Macrolide efflux protein A (mefA), found in Enterococcus faecalis (Streptococcus faecalis).